The sequence spans 315 residues: Putative quercetin 2,3-dioxygenase PA1205 (315 aa).

Positions 77, 79, 121, and 123 each coordinate a divalent metal cation.

The protein belongs to the pirin family. Requires a divalent metal cation as cofactor.

The catalysed reaction is quercetin + O2 = 2-(3,4-dihydroxybenzoyloxy)-4,6-dihydroxybenzoate + CO. Its pathway is flavonoid metabolism; quercetin degradation. Its function is as follows. Putative quercetin 2,3-dioxygenase. The chain is Putative quercetin 2,3-dioxygenase PA1205 from Pseudomonas aeruginosa (strain ATCC 15692 / DSM 22644 / CIP 104116 / JCM 14847 / LMG 12228 / 1C / PRS 101 / PAO1).